Consider the following 326-residue polypeptide: Probable cell division protein WhiA (326 aa).

A DNA-binding region (H-T-H motif) is located at residues 275–308; sequence SLDELGRLADPPMTKDAIAGRIRRLLAMADKRAL.

This sequence belongs to the WhiA family.

Functionally, involved in cell division and chromosome segregation. This chain is Probable cell division protein WhiA, found in Arthrobacter sp. (strain FB24).